The primary structure comprises 95 residues: Aspartyl/glutamyl-tRNA(Asn/Gln) amidotransferase subunit C (95 aa).

Belongs to the GatC family. As to quaternary structure, heterotrimer of A, B and C subunits.

The enzyme catalyses L-glutamyl-tRNA(Gln) + L-glutamine + ATP + H2O = L-glutaminyl-tRNA(Gln) + L-glutamate + ADP + phosphate + H(+). It carries out the reaction L-aspartyl-tRNA(Asn) + L-glutamine + ATP + H2O = L-asparaginyl-tRNA(Asn) + L-glutamate + ADP + phosphate + 2 H(+). Allows the formation of correctly charged Asn-tRNA(Asn) or Gln-tRNA(Gln) through the transamidation of misacylated Asp-tRNA(Asn) or Glu-tRNA(Gln) in organisms which lack either or both of asparaginyl-tRNA or glutaminyl-tRNA synthetases. The reaction takes place in the presence of glutamine and ATP through an activated phospho-Asp-tRNA(Asn) or phospho-Glu-tRNA(Gln). The sequence is that of Aspartyl/glutamyl-tRNA(Asn/Gln) amidotransferase subunit C from Brucella melitensis biotype 2 (strain ATCC 23457).